Consider the following 308-residue polypeptide: Shikimate kinase 1, chloroplastic (308 aa).

Residues 1-62 constitute a chloroplast transit peptide; it reads MEAGVGLALQ…RGSKPVAPLR (62 aa). 103-110 contributes to the ATP binding site; that stretch reads GMMGSGKS. Ser110 lines the Mg(2+) pocket. Residues Asp128, Arg153, and Gly175 each coordinate substrate. Residue Arg214 participates in ATP binding.

The protein belongs to the shikimate kinase family. It depends on Mg(2+) as a cofactor. As to expression, expressed in panicles.

It localises to the plastid. Its subcellular location is the chloroplast. It catalyses the reaction shikimate + ATP = 3-phosphoshikimate + ADP + H(+). The protein operates within metabolic intermediate biosynthesis; chorismate biosynthesis; chorismate from D-erythrose 4-phosphate and phosphoenolpyruvate: step 5/7. Functionally, catalyzes the specific phosphorylation of the 3-hydroxyl group of shikimic acid using ATP as a cosubstrate. In Oryza sativa subsp. japonica (Rice), this protein is Shikimate kinase 1, chloroplastic (SK1).